The primary structure comprises 362 residues: 3-dehydroquinate synthase (362 aa).

NAD(+) contacts are provided by residues 70-75 (EGEQYK), 104-108 (GVIGD), 128-129 (TT), Lys-141, Lys-150, and 168-171 (TLTT). Glu-183, His-246, and His-263 together coordinate Zn(2+).

Belongs to the sugar phosphate cyclases superfamily. Dehydroquinate synthase family. Co(2+) is required as a cofactor. Requires Zn(2+) as cofactor. The cofactor is NAD(+).

The protein localises to the cytoplasm. It carries out the reaction 7-phospho-2-dehydro-3-deoxy-D-arabino-heptonate = 3-dehydroquinate + phosphate. Its pathway is metabolic intermediate biosynthesis; chorismate biosynthesis; chorismate from D-erythrose 4-phosphate and phosphoenolpyruvate: step 2/7. Functionally, catalyzes the conversion of 3-deoxy-D-arabino-heptulosonate 7-phosphate (DAHP) to dehydroquinate (DHQ). This chain is 3-dehydroquinate synthase, found in Histophilus somni (strain 129Pt) (Haemophilus somnus).